Here is a 190-residue protein sequence, read N- to C-terminus: Adenylate kinase (190 aa).

10–15 (AAGKGT) lines the ATP pocket. Positions 30 to 59 (STGDMLRAAIASGSELGQRVSGIMERGELV) are NMP. AMP contacts are provided by residues Thr31, Arg36, 57–59 (ELV), 85–88 (GFPR), and Gln92. The tract at residues 126–136 (GRFAESGRADD) is LID. Arg127 serves as a coordination point for ATP. AMP-binding residues include Arg133 and Arg144. Gly172 serves as a coordination point for ATP.

Belongs to the adenylate kinase family. As to quaternary structure, monomer.

The protein resides in the cytoplasm. The enzyme catalyses AMP + ATP = 2 ADP. It functions in the pathway purine metabolism; AMP biosynthesis via salvage pathway; AMP from ADP: step 1/1. Its function is as follows. Catalyzes the reversible transfer of the terminal phosphate group between ATP and AMP. Plays an important role in cellular energy homeostasis and in adenine nucleotide metabolism. This chain is Adenylate kinase, found in Phenylobacterium zucineum (strain HLK1).